The primary structure comprises 225 residues: Insulin-induced gene 2 protein (225 aa).

The Cytoplasmic portion of the chain corresponds to 1 to 28 (MAEGETKSPGPKKCGPYISSVTSQSVNL). The chain crosses the membrane as a helical span at residues 29 to 51 (MIRGVVLFFIGVFLALVLNLLQI). Residues 52–70 (QRNVTLFPPDVIASIFSSA) are Lumenal-facing. A helical membrane pass occupies residues 71-88 (WWVPPCCGTASAVIGLLY). Residues 89–103 (PCIDRHLGEPHKFKR) lie on the Cytoplasmic side of the membrane. A helical membrane pass occupies residues 104–126 (EWSSVMRCVAVFVGINHASAKVD). The Lumenal portion of the chain corresponds to 127–129 (FDN). The chain crosses the membrane as a helical span at residues 130–148 (NIQLSLTLAALSIGLWWTF). The Cytoplasmic segment spans residues 149-153 (DRSRS). A Phosphoserine modification is found at serine 151. The helical transmembrane segment at 154–175 (GFGLGVGIAFLATVVTQLLVYN) threads the bilayer. At 176 to 189 (GVYQYTSPDFLYVR) the chain is on the lumenal side. The helical transmembrane segment at 190–207 (SWLPCIFFAGGITMGNIG) threads the bilayer. At 208 to 225 (RQLAMYECKVIAEKSHQE) the chain is on the cytoplasmic side. At cysteine 215 the chain carries Cysteine sulfenic acid (-SOH); alternate. Residue cysteine 215 forms a Glycyl cysteine thioester (Cys-Gly) (interchain with G-Cter in ubiquitin); alternate linkage. Residues 219-225 (AEKSHQE) carry the KxHxx motif.

It belongs to the INSIG family. In terms of assembly, interacts with SCAP; interaction is direct and only takes place in the presence of sterols; it prevents interaction between SCAP and the coat protein complex II (COPII). Associates with the SCAP-SREBP complex (composed of SCAP and SREBF1/SREBP1 or SREBF2/SREBP2); association is mediated via its interaction with SCAP and only takes place in the presence of sterols. Interacts with RNF139. Interacts with RNF145. Post-translationally, phosphorylation at Ser-151 by PCK1 reduces binding to oxysterol, disrupting the interaction between INSIG2 and SCAP, thereby promoting nuclear translocation of SREBP proteins (SREBF1/SREBP1 or SREBF2/SREBP2) and subsequent transcription of downstream lipogenesis-related genes. In terms of processing, polyubiquitinated by AMFR/gp78 at Cys-215 in some tissues such as adipose tissues, undifferentiated myoblasts and liver, leading to its degradation. In differentiated myotubes, Cys-215 oxidation prevents ubiquitination at the same site, resulting in protein stabilization. Oxidized at Cys-215 in differentiated myotubes, preventing ubiquitination at the same site, and resulting in protein stabilization.

The protein localises to the endoplasmic reticulum membrane. Functionally, oxysterol-binding protein that mediates feedback control of cholesterol synthesis by controlling both endoplasmic reticulum to Golgi transport of SCAP and degradation of HMGCR. Acts as a negative regulator of cholesterol biosynthesis by mediating the retention of the SCAP-SREBP complex in the endoplasmic reticulum, thereby blocking the processing of sterol regulatory element-binding proteins (SREBPs) SREBF1/SREBP1 and SREBF2/SREBP2. Binds oxysterol, including 22-hydroxycholesterol, 24-hydroxycholesterol, 25-hydroxycholesterol and 27-hydroxycholesterol, regulating interaction with SCAP and retention of the SCAP-SREBP complex in the endoplasmic reticulum. In presence of oxysterol, interacts with SCAP, retaining the SCAP-SREBP complex in the endoplasmic reticulum, thereby preventing SCAP from escorting SREBF1/SREBP1 and SREBF2/SREBP2 to the Golgi. Sterol deprivation or phosphorylation by PCK1 reduce oxysterol-binding, disrupting the interaction between INSIG2 and SCAP, thereby promoting Golgi transport of the SCAP-SREBP complex, followed by processing and nuclear translocation of SREBF1/SREBP1 and SREBF2/SREBP2. Also regulates cholesterol synthesis by regulating degradation of HMGCR: initiates the sterol-mediated ubiquitin-mediated endoplasmic reticulum-associated degradation (ERAD) of HMGCR via recruitment of the reductase to the ubiquitin ligase RNF139. The protein is Insulin-induced gene 2 protein of Pongo abelii (Sumatran orangutan).